The primary structure comprises 123 residues: Galanin peptides (123 aa).

Residues 1-19 form the signal peptide; sequence MPRGSVLLLASLLLAAALS. The propeptide occupies 20-30; it reads ATLGLGSPVKE. Basic and acidic residues predominate over residues 53-66; the sequence is SFQDKHGLAGKREL. Residues 53–79 form a disordered region; that stretch reads SFQDKHGLAGKRELEPEDEARPGSFDR. Alanine 61 is modified (alanine amide). Serine 116 is subject to Phosphoserine.

The protein belongs to the galanin family.

The protein resides in the secreted. Its function is as follows. Endocrine hormone of the central and peripheral nervous systems that binds and activates the G protein-coupled receptors GALR1, GALR2, and GALR3. This small neuropeptide may regulate diverse physiologic functions including contraction of smooth muscle of the gastrointestinal and genitourinary tract, growth hormone and insulin release and adrenal secretion. In Bos taurus (Bovine), this protein is Galanin peptides (GAL).